A 410-amino-acid chain; its full sequence is Peptidase T (410 aa).

A Zn(2+)-binding site is contributed by His-79. Residue Asp-81 is part of the active site. Residue Asp-142 participates in Zn(2+) binding. The active-site Proton acceptor is the Glu-176. 3 residues coordinate Zn(2+): Glu-177, Asp-199, and His-381.

This sequence belongs to the peptidase M20B family. Requires Zn(2+) as cofactor.

The protein resides in the cytoplasm. The catalysed reaction is Release of the N-terminal residue from a tripeptide.. In terms of biological role, cleaves the N-terminal amino acid of tripeptides. This chain is Peptidase T, found in Listeria innocua serovar 6a (strain ATCC BAA-680 / CLIP 11262).